The following is a 302-amino-acid chain: Recombination-associated protein RdgC (302 aa).

Belongs to the RdgC family.

The protein resides in the cytoplasm. It is found in the nucleoid. Its function is as follows. May be involved in recombination. This Actinobacillus pleuropneumoniae serotype 5b (strain L20) protein is Recombination-associated protein RdgC.